Here is a 672-residue protein sequence, read N- to C-terminus: uncharacterized protein (672 aa).

An N-terminal signal peptide occupies residues 1 to 24; sequence MKTLKTLKIFIIICIASVSLASFA. 6 helical membrane-spanning segments follow: residues 226–246, 254–274, 410–430, 436–456, 469–489, and 562–582; these read IIGA…ALNK, IALF…LGPL, IILA…LYFI, CMIT…MALF, VCIS…LLIT, and VVSI…FYYF. The interval 626–672 is disordered; it reads ASQGKPSVGDKPDVGGKRKEGEQQGGDSESGAGGGLADLASGSGGGK. A compositionally biased stretch (basic and acidic residues) spans 633 to 647; the sequence is VGDKPDVGGKRKEGE. Residues 656–672 are compositionally biased toward gly residues; the sequence is GAGGGLADLASGSGGGK.

The protein belongs to the TrbL/VirB6 family.

It is found in the cell membrane. This is an uncharacterized protein from Rickettsia felis (strain ATCC VR-1525 / URRWXCal2) (Rickettsia azadi).